The sequence spans 555 residues: Glucose-6-phosphate isomerase (555 aa).

D-glucose 6-phosphate-binding positions include 169 to 170 (GS), 219 to 224 (SKTFTT), Gln364, Glu368, His399, and Lys521. Residue Glu368 is the Proton donor of the active site. Catalysis depends on residues His399 and Lys521.

The protein belongs to the GPI family. Homodimer.

The protein resides in the cytoplasm. Its subcellular location is the cytosol. The catalysed reaction is alpha-D-glucose 6-phosphate = beta-D-fructose 6-phosphate. It participates in carbohydrate degradation; glycolysis; D-glyceraldehyde 3-phosphate and glycerone phosphate from D-glucose: step 2/4. In the cytoplasm, catalyzes the conversion of glucose-6-phosphate to fructose-6-phosphate, the second step in glycolysis, and the reverse reaction during gluconeogenesis. In Eremothecium gossypii (strain ATCC 10895 / CBS 109.51 / FGSC 9923 / NRRL Y-1056) (Yeast), this protein is Glucose-6-phosphate isomerase (PGI1).